The following is a 294-amino-acid chain: N-acetylmuramic acid 6-phosphate etherase (294 aa).

An SIS domain is found at 54–217 (VIQSFEEEGR…STASMIGVGK (164 aa)). The active-site Proton donor is Glu82. Glu113 is a catalytic residue.

It belongs to the GCKR-like family. MurNAc-6-P etherase subfamily. As to quaternary structure, homodimer.

It catalyses the reaction N-acetyl-D-muramate 6-phosphate + H2O = N-acetyl-D-glucosamine 6-phosphate + (R)-lactate. The protein operates within amino-sugar metabolism; N-acetylmuramate degradation. Functionally, specifically catalyzes the cleavage of the D-lactyl ether substituent of MurNAc 6-phosphate, producing GlcNAc 6-phosphate and D-lactate. The protein is N-acetylmuramic acid 6-phosphate etherase of Bacillus anthracis (strain A0248).